A 274-amino-acid polypeptide reads, in one-letter code: Phosphatidylglycerol--prolipoprotein diacylglyceryl transferase (274 aa).

Transmembrane regions (helical) follow at residues 16–36, 62–82, 94–114, and 129–149; these read VGLHLSWYGIFFSLGIFLSSF, FALGALLVIVIGARAFYVLFY, IIKIWKGGLSSHGAIIALVIW, and LSVTYICDICGAVFGVAALLI. Residue Arg-150 coordinates a 1,2-diacyl-sn-glycero-3-phospho-(1'-sn-glycerol). A run of 3 helical transmembrane segments spans residues 184–204, 213–233, and 247–267; these read VQLYEGVSYLLLSLVLYWLCY, GYSAAGALIGVASIRFCAEFF, and LTIGQWLSIPMVFLGIGILWI.

This sequence belongs to the Lgt family.

The protein resides in the cell inner membrane. The catalysed reaction is L-cysteinyl-[prolipoprotein] + a 1,2-diacyl-sn-glycero-3-phospho-(1'-sn-glycerol) = an S-1,2-diacyl-sn-glyceryl-L-cysteinyl-[prolipoprotein] + sn-glycerol 1-phosphate + H(+). It functions in the pathway protein modification; lipoprotein biosynthesis (diacylglyceryl transfer). Functionally, catalyzes the transfer of the diacylglyceryl group from phosphatidylglycerol to the sulfhydryl group of the N-terminal cysteine of a prolipoprotein, the first step in the formation of mature lipoproteins. The polypeptide is Phosphatidylglycerol--prolipoprotein diacylglyceryl transferase (Chlamydia muridarum (strain MoPn / Nigg)).